Here is a 626-residue protein sequence, read N- to C-terminus: Chaperone protein HtpG (626 aa).

An a; substrate-binding region spans residues 1–339; that stretch reads MSQNQETRGF…SNDLPLNVSR (339 aa). The tract at residues 340–555 is b; that stretch reads EILQDNKITA…NDQMTTQMAK (216 aa). Positions 556–626 are c; sequence LFAAAGQPVP…FIKRINKLLG (71 aa).

This sequence belongs to the heat shock protein 90 family. As to quaternary structure, homodimer.

The protein localises to the cytoplasm. Functionally, molecular chaperone. Has ATPase activity. This is Chaperone protein HtpG from Haemophilus influenzae (strain PittGG).